Here is a 333-residue protein sequence, read N- to C-terminus: Ig gamma-2B chain C region (333 aa).

3 Ig-like domains span residues 6–96, 124–223, and 232–328; these read PSVY…KKVE, PSVF…KTIS, and PQVY…KSIS. Disulfide bonds link Cys-27-Cys-80, Cys-147-Cys-207, and Cys-253-Cys-311.

The chain is Ig gamma-2B chain C region (Igh-1a) from Rattus norvegicus (Rat).